The primary structure comprises 585 residues: Probable phosphoglucomutase, cytoplasmic 2 (585 aa).

Residues 1-20 (MVSFKVSLVSTSPIDGQKPG) form a disordered region. Residues R25 and S124 each contribute to the alpha-D-glucose 1,6-bisphosphate site. The Phosphoserine intermediate role is filled by S124. Mg(2+) contacts are provided by S124, D301, D303, and D305. The residue at position 124 (S124) is a Phosphoserine. 6 residues coordinate alpha-D-glucose 1,6-bisphosphate: D305, R306, T369, E388, S390, and K401.

This sequence belongs to the phosphohexose mutase family. Monomer. It depends on Mg(2+) as a cofactor.

The protein resides in the cytoplasm. The catalysed reaction is alpha-D-glucose 1-phosphate = alpha-D-glucose 6-phosphate. It carries out the reaction O-phospho-L-seryl-[protein] + alpha-D-glucose 1-phosphate = alpha-D-glucose 1,6-bisphosphate + L-seryl-[protein]. It catalyses the reaction alpha-D-glucose 1,6-bisphosphate + L-seryl-[protein] = O-phospho-L-seryl-[protein] + alpha-D-glucose 6-phosphate. Its function is as follows. Catalyzes the reversible isomerization of alpha-D-glucose 1-phosphate to alpha-D-glucose 6-phosphate. The mechanism proceeds via the intermediate compound alpha-D-glucose 1,6-bisphosphate. This enzyme participates in both the breakdown and synthesis of glucose. The polypeptide is Probable phosphoglucomutase, cytoplasmic 2 (Arabidopsis thaliana (Mouse-ear cress)).